The primary structure comprises 360 residues: UDP-N-acetylglucosamine--N-acetylmuramyl-(pentapeptide) pyrophosphoryl-undecaprenol N-acetylglucosamine transferase (360 aa).

UDP-N-acetyl-alpha-D-glucosamine contacts are provided by residues 11–13 (TGG), Asn-120, Arg-161, Ser-188, and Gln-282.

This sequence belongs to the glycosyltransferase 28 family. MurG subfamily.

It is found in the cell inner membrane. It catalyses the reaction di-trans,octa-cis-undecaprenyl diphospho-N-acetyl-alpha-D-muramoyl-L-alanyl-D-glutamyl-meso-2,6-diaminopimeloyl-D-alanyl-D-alanine + UDP-N-acetyl-alpha-D-glucosamine = di-trans,octa-cis-undecaprenyl diphospho-[N-acetyl-alpha-D-glucosaminyl-(1-&gt;4)]-N-acetyl-alpha-D-muramoyl-L-alanyl-D-glutamyl-meso-2,6-diaminopimeloyl-D-alanyl-D-alanine + UDP + H(+). Its pathway is cell wall biogenesis; peptidoglycan biosynthesis. In terms of biological role, cell wall formation. Catalyzes the transfer of a GlcNAc subunit on undecaprenyl-pyrophosphoryl-MurNAc-pentapeptide (lipid intermediate I) to form undecaprenyl-pyrophosphoryl-MurNAc-(pentapeptide)GlcNAc (lipid intermediate II). This chain is UDP-N-acetylglucosamine--N-acetylmuramyl-(pentapeptide) pyrophosphoryl-undecaprenol N-acetylglucosamine transferase, found in Synechococcus sp. (strain RCC307).